We begin with the raw amino-acid sequence, 231 residues long: Histone H1 (231 aa).

Residues 1–17 show a composition bias toward low complexity; sequence MSDPAIEVAPVPVASPA. Disordered regions lie at residues 1 to 44 and 124 to 231; these read MSDP…PVSD and TKKV…AKKA. One can recognise an H15 domain in the interval 38–112; that stretch reads THPPVSDMIV…GASGSFKLPA (75 aa). Composition is skewed to basic residues over residues 145–171, 178–213, and 221–231; these read KVKK…KTTK, PTKK…KAKK, and KAAKKPSAKKA.

The protein belongs to the histone H1/H5 family.

It is found in the nucleus. Its subcellular location is the chromosome. Its function is as follows. Histones H1 are necessary for the condensation of nucleosome chains into higher-order structures. In Chironomus thummi thummi (Midge), this protein is Histone H1.